Here is a 239-residue protein sequence, read N- to C-terminus: Skn-1 dependent zygotic transcript 1 protein (239 aa).

Functionally, may have a role in mesendoderm development during embryogenesis. The sequence is that of Skn-1 dependent zygotic transcript 1 protein from Caenorhabditis briggsae.